We begin with the raw amino-acid sequence, 202 residues long: Recombination protein RecR (202 aa).

A C4-type zinc finger spans residues Cys-56–Cys-71. Residues Thr-79–Pro-179 enclose the Toprim domain.

This sequence belongs to the RecR family.

Its function is as follows. May play a role in DNA repair. It seems to be involved in an RecBC-independent recombinational process of DNA repair. It may act with RecF and RecO. This chain is Recombination protein RecR, found in Rhodococcus jostii (strain RHA1).